The chain runs to 193 residues: Large ribosomal subunit protein bL21 (193 aa).

The protein belongs to the bacterial ribosomal protein bL21 family. As to quaternary structure, part of the 50S ribosomal subunit. Contacts protein L20.

This protein binds to 23S rRNA in the presence of protein L20. In Ruegeria pomeroyi (strain ATCC 700808 / DSM 15171 / DSS-3) (Silicibacter pomeroyi), this protein is Large ribosomal subunit protein bL21.